A 171-amino-acid polypeptide reads, in one-letter code: Peptidyl-prolyl cis-trans isomerase slr1251 (171 aa).

A PPIase cyclophilin-type domain is found at phenylalanine 6–glutamate 169.

The protein belongs to the cyclophilin-type PPIase family.

The enzyme catalyses [protein]-peptidylproline (omega=180) = [protein]-peptidylproline (omega=0). In terms of biological role, PPIases accelerate the folding of proteins. It catalyzes the cis-trans isomerization of proline imidic peptide bonds in oligopeptides. This Synechocystis sp. (strain ATCC 27184 / PCC 6803 / Kazusa) protein is Peptidyl-prolyl cis-trans isomerase slr1251.